A 1175-amino-acid chain; its full sequence is 1-phosphatidylinositol 4,5-bisphosphate phosphodiesterase beta-4 (1175 aa).

An N-acetylalanine modification is found at Ala-2. The PI-PLC X-box domain occupies Gln-313–Lys-463. Residues His-328 and His-375 contribute to the active site. The interval Ala-487–Pro-512 is disordered. The span at Leu-493–Glu-508 shows a compositional bias: acidic residues. The PI-PLC Y-box domain maps to Leu-565–Arg-681. Residues Asp-684–Leu-809 enclose the C2 domain. Disordered regions lie at residues Ser-860–Gly-904 and Lys-1082–Leu-1110. Polar residues-rich tracts occupy residues Val-885–Ala-900 and Met-1085–Asp-1094. Thr-886 carries the phosphothreonine modification. Basic and acidic residues predominate over residues Lys-1095–Glu-1109.

Ca(2+) is required as a cofactor. In terms of tissue distribution, preferentially expressed in the retina.

Its subcellular location is the cell membrane. It carries out the reaction a 1,2-diacyl-sn-glycero-3-phospho-(1D-myo-inositol-4,5-bisphosphate) + H2O = 1D-myo-inositol 1,4,5-trisphosphate + a 1,2-diacyl-sn-glycerol + H(+). The catalysed reaction is a 1,2-diacyl-sn-glycero-3-phospho-(1D-myo-inositol) + H2O = 1D-myo-inositol 1-phosphate + a 1,2-diacyl-sn-glycerol + H(+). In terms of biological role, activated phosphatidylinositol-specific phospholipase C enzymes catalyze the production of the second messenger molecules diacylglycerol (DAG) and inositol 1,4,5-trisphosphate (IP3) involved in G-protein coupled receptor signaling pathways. PLCB4 is a direct effector of the endothelin receptor signaling pathway that plays an essential role in lower jaw and middle ear structures development. This Rattus norvegicus (Rat) protein is 1-phosphatidylinositol 4,5-bisphosphate phosphodiesterase beta-4.